Reading from the N-terminus, the 1103-residue chain is Retinal guanylyl cyclase 2 (1103 aa).

Positions 1–46 (MFLAPWPFSHLMLWFVTLGRQRGQHGLASFKLLWCLWLLVLMSLPL) are cleaved as a signal peptide. At 47-465 (QVWAPPYKIG…DGRICQGGIN (419 aa)) the chain is on the extracellular side. Cys-104 and Cys-132 are oxidised to a cystine. Residues 466–490 (PTFALMVCLALLIALLSINGFAYFI) traverse the membrane as a helical segment. Residues 491–1103 (RHRINKIQLI…FQRRKQKSSW (613 aa)) lie on the Cytoplasmic side of the membrane. The 281-residue stretch at 532–812 (FQITSEVQSG…DEIFNQFKTF (281 aa)) folds into the Protein kinase domain. The region spanning 884-1014 (TLYFSDIVGF…DTVNTASRME (131 aa)) is the Guanylate cyclase domain.

Belongs to the adenylyl cyclase class-4/guanylyl cyclase family. Homodimer. Interacts with RD3; promotes the exit of GUCY2F from the endoplasmic reticulum and its trafficking to the photoreceptor outer segments. Post-translationally, there are 9 conserved cysteine residues in sensory guanylate cyclases, 6 in the extracellular domain, which may be involved in intra- or interchain disulfide bonds. In terms of tissue distribution, expressed specifically in retina.

It localises to the membrane. The protein resides in the photoreceptor outer segment membrane. It carries out the reaction GTP = 3',5'-cyclic GMP + diphosphate. Activated by GUCA1B when free calcium ions concentration is low, and inhibited by GUCA1B when free calcium ions concentration is high. Inhibited by RD3. Its function is as follows. Responsible for the synthesis of cyclic GMP (cGMP) in rods and cones of photoreceptors. Plays an essential role in phototransduction, by mediating cGMP replenishment. May also participate in the trafficking of membrane-asociated proteins to the photoreceptor outer segment membrane. This chain is Retinal guanylyl cyclase 2 (GUCY2F), found in Bos taurus (Bovine).